Consider the following 324-residue polypeptide: Olfactory receptor 52I1 (324 aa).

Residues 1-29 (MLGPAYNHTMETPASFLLVGIPGLQSSHL) are Extracellular-facing. N-linked (GlcNAc...) asparagine glycosylation is present at Asn7. Residues 30-50 (WLAISLSAMYITALLGNTLIV) traverse the membrane as a helical segment. Residues 51-58 (TAIWMDST) are Cytoplasmic-facing. A helical membrane pass occupies residues 59–79 (RHEPMYCFLCVLAAVDIVMAS). Residues 80–103 (SVVPKMVSIFCSGDSSISFSACFT) are Extracellular-facing. Cys101 and Cys193 are oxidised to a cystine. The chain crosses the membrane as a helical span at residues 104–124 (QMFFVHLATAVETGLLLTMAF). Residues 125 to 143 (DRYVAICKPLHYKRILTPQ) are Cytoplasmic-facing. A helical transmembrane segment spans residues 144–164 (VMLGMSMAVTIRAVTFMTPLS). Residues 165–200 (WMMNHLPFCGSNVVVHSYCKHIALARLACADPVPSS) lie on the Extracellular side of the membrane. A helical membrane pass occupies residues 201-221 (LYSLIGSSLMVGSDVAFIAAS). Residues 222–241 (YILILRAVFDLSSKTAQLKA) are Cytoplasmic-facing. The chain crosses the membrane as a helical span at residues 242 to 262 (LSTCGSHVGVMALYYLPGMAS). Over 263-278 (IYAAWLGQDIVPLHTQ) the chain is Extracellular. A helical membrane pass occupies residues 279 to 299 (VLLADLYVIIPATLNPIIYGM). Residues 300–324 (RTKQLLEGIWSYLMHFLFDHSNLGS) are Cytoplasmic-facing.

It belongs to the G-protein coupled receptor 1 family.

It localises to the cell membrane. Functionally, odorant receptor. In Homo sapiens (Human), this protein is Olfactory receptor 52I1 (OR52I1).